Here is a 202-residue protein sequence, read N- to C-terminus: Small ribosomal subunit protein uS4 (202 aa).

The region spanning 94–157 (SRLDSLVYRA…LEIPLIKNTL (64 aa)) is the S4 RNA-binding domain.

It belongs to the universal ribosomal protein uS4 family. In terms of assembly, part of the 30S ribosomal subunit. Contacts protein S5. The interaction surface between S4 and S5 is involved in control of translational fidelity.

Its function is as follows. One of the primary rRNA binding proteins, it binds directly to 16S rRNA where it nucleates assembly of the body of the 30S subunit. In terms of biological role, with S5 and S12 plays an important role in translational accuracy. This chain is Small ribosomal subunit protein uS4, found in Ureaplasma parvum serovar 3 (strain ATCC 27815 / 27 / NCTC 11736).